The following is an 865-amino-acid chain: Alanine--tRNA ligase (865 aa).

His554, His558, Cys656, and His660 together coordinate Zn(2+).

Belongs to the class-II aminoacyl-tRNA synthetase family. It depends on Zn(2+) as a cofactor.

Its subcellular location is the cytoplasm. The enzyme catalyses tRNA(Ala) + L-alanine + ATP = L-alanyl-tRNA(Ala) + AMP + diphosphate. Functionally, catalyzes the attachment of alanine to tRNA(Ala) in a two-step reaction: alanine is first activated by ATP to form Ala-AMP and then transferred to the acceptor end of tRNA(Ala). Also edits incorrectly charged Ser-tRNA(Ala) and Gly-tRNA(Ala) via its editing domain. The protein is Alanine--tRNA ligase of Francisella tularensis subsp. novicida (strain U112).